A 751-amino-acid polypeptide reads, in one-letter code: Palmitoyltransferase ZDHHC8B (751 aa).

Topologically, residues 1 to 13 (MPNSVGKRFKPTK) are cytoplasmic. The chain crosses the membrane as a helical span at residues 14 to 34 (YIPVSTAATLLVGSTTLFFVF). Residues 35–41 (TCPWLTK) are Extracellular-facing. A helical membrane pass occupies residues 42-62 (AVSPVVPLYNGIVFLFVLANF). At 63 to 148 (SMATFMDPGV…NCIGRRNYRY (86 aa)) the chain is on the cytoplasmic side. The 51-residue stretch at 104 to 154 (KWCATCHFYRPPRCSHCSVCDNCVEEFDHHCPWVNNCIGRRNYRYFFLFLL) folds into the DHHC domain. The active-site S-palmitoyl cysteine intermediate is the Cys134. Residues 149–169 (FFLFLLSLSVHMVGVFSFGLL) traverse the membrane as a helical segment. At 170-185 (FVLHHLETLSALHTTV) the chain is on the extracellular side. A helical transmembrane segment spans residues 186–206 (TLVVMCVTGLFFIPVMGLTGF). The Cytoplasmic portion of the chain corresponds to 207-751 (HMVLVARGRT…VGGTTYEISV (545 aa)). Disordered regions lie at residues 293 to 346 (RSKS…PSTP), 437 to 461 (CTPLGGTKHETITSTPHRGVFSPGT), 633 to 659 (RSSASSLVRAPRTSTTSLHTDGGGMNR), 666 to 685 (RSPVHQSHQSPTSVPRSPSY), and 703 to 736 (HLGTREDIGQGKVNGQLKGQYGTPSGTPSRHTSV). Residues 326 to 338 (SQLTSSEESSLSS) are compositionally biased toward low complexity. Polar residues-rich tracts occupy residues 633–651 (RSSASSLVRAPRTSTTSLH), 669–681 (VHQSHQSPTSVPR), and 724–733 (GTPSGTPSRH).

The protein belongs to the DHHC palmitoyltransferase family. ERF2/ZDHHC9 subfamily.

Its subcellular location is the golgi apparatus membrane. It is found in the mitochondrion membrane. The enzyme catalyses L-cysteinyl-[protein] + hexadecanoyl-CoA = S-hexadecanoyl-L-cysteinyl-[protein] + CoA. Its function is as follows. Palmitoyltransferase that catalyzes the addition of palmitate onto various protein substrates and therefore function in several unrelated biological processes. The chain is Palmitoyltransferase ZDHHC8B from Danio rerio (Zebrafish).